The primary structure comprises 94 residues: Co-chaperonin GroES (94 aa).

It belongs to the GroES chaperonin family. As to quaternary structure, heptamer of 7 subunits arranged in a ring. Interacts with the chaperonin GroEL.

Its subcellular location is the cytoplasm. Its function is as follows. Together with the chaperonin GroEL, plays an essential role in assisting protein folding. The GroEL-GroES system forms a nano-cage that allows encapsulation of the non-native substrate proteins and provides a physical environment optimized to promote and accelerate protein folding. GroES binds to the apical surface of the GroEL ring, thereby capping the opening of the GroEL channel. This chain is Co-chaperonin GroES, found in Streptococcus pneumoniae (strain Taiwan19F-14).